The primary structure comprises 494 residues: Ceramide glucosyltransferase (494 aa).

The Lumenal portion of the chain corresponds to 1 to 6 (MPLLMD). The chain crosses the membrane as a helical span at residues 7-27 (GLAYAGAIWSLIVFCVQAIGL). The Cytoplasmic portion of the chain corresponds to 28-337 (YQLFRSYSRP…VRWLRVRKWT (310 aa)). A short sequence motif (D1) is located at residue Asp95. A short sequence motif (D2) is located at residue Asp160. A short sequence motif (D3) is located at residue Asp285. Asp285 (proton acceptor) is an active-site residue. Positions 326–330 (RRVRW) match the (Q/R)XXRW motif. The helical transmembrane segment at 338–358 (VLLATLVEPGVESMVCCMAFA) threads the bilayer. Topologically, residues 359 to 380 (HALTTTPWCPNPADWPIPHTWT) are lumenal. A helical membrane pass occupies residues 381-401 (ALWSIWLAAIAVWATLDYVVY). The Cytoplasmic segment spans residues 402–428 (HFLHSCRSIEKDADSPDFAQGNELMKR). A helical membrane pass occupies residues 429 to 449 (PFGAWILAWIGREILALPIWT). The Lumenal segment spans residues 450 to 494 (RAVLLGTTVTWRGTKFKVRPDQSVVDIPNAGAKSNGIGSTNRKVR).

The protein belongs to the glycosyltransferase 2 family.

It is found in the golgi apparatus membrane. It carries out the reaction an N-acylsphing-4-enine + UDP-alpha-D-glucose = a beta-D-glucosyl-(1&lt;-&gt;1')-N-acylsphing-4-enine + UDP + H(+). Its pathway is lipid metabolism; sphingolipid metabolism. Functionally, catalyzes the final step in the biosynthesis of the membrane lipid glucosylceramide (GluCer), the transfer of glucose to ceramide. Glucosylceramides play important roles in growth, differentiation and pathogenicity. The sequence is that of Ceramide glucosyltransferase from Pyricularia oryzae (strain 70-15 / ATCC MYA-4617 / FGSC 8958) (Rice blast fungus).